Consider the following 3425-residue polypeptide: Genome polyprotein (3425 aa).

The tract at residues 3–16 (NKKPGRPGSGRVVN) is interaction with host EXOC1. Residues 38-73 (VLRGAGPIRFVLALLTFFKFTALRPTIGMLKRWKLV) are hydrophobic; homodimerization of capsid protein C. Residues 105–120 (GGSCSWIIMLLPIVAG) constitute a propeptide, ER anchor for the capsid protein C, removed in mature form by serine protease NS3. The chain crosses the membrane as a helical span at residues 105-125 (GGSCSWIIMLLPIVAGLKLGN). The N-linked (GlcNAc...) asparagine; by host glycan is linked to Asn-135. Transmembrane regions (helical) follow at residues 247 to 267 (WALRNPGYALAAIFIGWNLGT) and 273 to 293 (IIFTIMLMLIAPAYSFSCLGM). 6 disulfides stabilise this stretch: Cys-290–Cys-317, Cys-347–Cys-403, Cys-361–Cys-392, Cys-379–Cys-408, Cys-477–Cys-575, and Cys-592–Cys-623. A fusion peptide region spans residues 385-398 (DRGWGNGCGLFGKG). A run of 2 helical transmembrane segments spans residues 740–760 (LFGGMSWTTQGMLGALLLWMG) and 768–788 (ISMTFLAVGGILVFLAVNVNA). Cys-792 and Cys-803 are disulfide-bonded. Asn-918, Asn-963, and Asn-995 each carry an N-linked (GlcNAc...) asparagine; by host glycan. Cystine bridges form between Cys-967/Cys-1011, Cys-1068/Cys-1117, Cys-1079/Cys-1100, and Cys-1101/Cys-1104. A run of 7 helical transmembrane segments spans residues 1138-1158 (VMAFQGGGMEPMQLGMLVMIV), 1169-1189 (TAPIAWSALLLLMALVLFGGI), 1214-1234 (IVHLAMVAAFNIQPGLLIGFL), 1290-1310 (FALPLVSLLAPGLRIVGIDVV), 1337-1357 (MLLGVACATAGIASPLVFAGL), 1369-1389 (WPVSEALTAVGLTFALAGGIA), and 1395-1415 (SMAIPLAVGGIMLVVAVVTGF). Residues 1421 to 1460 (LEKASDISWSEEARVTGASQRFDVEIDQDGNMRLLNDPGV) form an interacts with and activates NS3 protease region. The Peptidase S7 domain occupies 1499–1676 (GGVIWDVPAP…EKKEEEVPQV (178 aa)). Active-site charge relay system; for serine protease NS3 activity residues include His-1549, Asp-1573, and Ser-1633. Residues 1679 to 1835 (ENMLRKRQLT…DSNSPITDIE (157 aa)) enclose the Helicase ATP-binding domain. Residues 1683–1686 (RKRQ) form an important for RNA-binding region. 1692 to 1699 (LHPGSGKT) serves as a coordination point for ATP. The DEAH box signature appears at 1783-1786 (DEAH). Positions 1845-2011 (SGYEWITDFQ…GLVAQLYGPE (167 aa)) constitute a Helicase C-terminal domain. Residues 2162 to 2166 (EELPE) form a regulates the ATPase activity of NS3 helicase region. The next 8 membrane-spanning stretches (helical) occupy residues 2169 to 2189 (ETFLLVFMMTVASMGVFLFFV), 2194 to 2214 (LGKTGLGAMVMATVTVLLWIA), 2216 to 2236 (VPAQKIAGVLLVSLLLMIVLI), 2252 to 2272 (VFMIVVLLVVGAVASNEMGWL), 2306 to 2326 (AWAAYAGATTFLTPLLKHLII), 2334 to 2354 (LMAMTAQAGALFGLGKGMPFV), 2371 to 2391 (FTMTTTVSAVMMVILHYAFLV), and 2441 to 2461 (CVLVGIALVAVFLTPNTLTLT). The region spanning 2521–2786 (GGGTGRTLGE…DVDLGSGTRA (266 aa)) is the mRNA cap 0-1 NS5-type MT domain. Ser-2576 provides a ligand contact to S-adenosyl-L-methionine. Phosphoserine is present on Ser-2576. Catalysis depends on Lys-2581, which acts as the For 2'-O-MTase activity. Gly-2606, Trp-2607, Thr-2624, Lys-2625, and Val-2652 together coordinate S-adenosyl-L-methionine. Asp-2666 serves as the catalytic For 2'-O-MTase activity. Ile-2667 is a binding site for S-adenosyl-L-methionine. Active-site for 2'-O-MTase activity residues include Lys-2702 and Glu-2738. Tyr-2740 lines the S-adenosyl-L-methionine pocket. Zn(2+)-binding residues include Glu-2960, His-2964, Cys-2969, and Cys-2972. One can recognise a RdRp catalytic domain in the interval 3050 to 3202 (GLMYADDTAG…KPADDRFATA (153 aa)). Zn(2+) is bound by residues His-3237, Cys-3253, and Cys-3372. Residues 3423–3425 (GVL) carry the PDZ-binding motif.

In the N-terminal section; belongs to the class I-like SAM-binding methyltransferase superfamily. mRNA cap 0-1 NS5-type methyltransferase family. As to quaternary structure, homodimer. Forms heterodimers with envelope protein E in the endoplasmic reticulum and Golgi. In terms of assembly, homodimer; in the endoplasmic reticulum and Golgi. Interacts with protein prM. Interacts with non-structural protein 1. As to quaternary structure, homodimer; Homohexamer when secreted. Interacts with envelope protein E. NS1 interacts with NS4B. Interacts with host MAVS (via C-terminus); this interaction blocks the interaction of MAVS with RIGI or IFIH1/MDA5. Interacts (via N-terminus) with serine protease NS3. In terms of assembly, forms a heterodimer with serine protease NS3. May form homooligomers. As to quaternary structure, forms a heterodimer with NS2B. Interacts with non-structural protein 2A (via N-terminus). Interacts with NS4B. Interacts with unphosphorylated RNA-directed RNA polymerase NS5; this interaction stimulates RNA-directed RNA polymerase NS5 guanylyltransferase activity. Interacts with serine protease NS3. In terms of assembly, homodimer. In terms of processing, specific enzymatic cleavages in vivo yield mature proteins. Cleavages in the lumen of endoplasmic reticulum are performed by host signal peptidase, whereas cleavages in the cytoplasmic side are performed by serine protease NS3. Signal cleavage at the 2K-4B site requires a prior NS3 protease-mediated cleavage at the 4A-2K site. Both NS2A and NS2B proteins are required in cis for NS2A/2B proteolytic processing. Post-translationally, cleaved in post-Golgi vesicles by a host furin, releasing the mature small envelope protein M, and peptide pr. This cleavage is incomplete as up to 30% of viral particles still carry uncleaved prM. N-glycosylated. In terms of processing, N-glycosylated. The excreted form is glycosylated and this is required for efficient secretion of the protein from infected cells. Post-translationally, phosphorylated on serines residues. This phosphorylation may trigger NS5 nuclear localization.

The protein resides in the virion. The protein localises to the host nucleus. It localises to the host cytoplasm. Its subcellular location is the host perinuclear region. It is found in the secreted. The protein resides in the virion membrane. The protein localises to the host endoplasmic reticulum membrane. It catalyses the reaction Selective hydrolysis of -Xaa-Xaa-|-Yaa- bonds in which each of the Xaa can be either Arg or Lys and Yaa can be either Ser or Ala.. It carries out the reaction RNA(n) + a ribonucleoside 5'-triphosphate = RNA(n+1) + diphosphate. The catalysed reaction is a ribonucleoside 5'-triphosphate + H2O = a ribonucleoside 5'-diphosphate + phosphate + H(+). The enzyme catalyses ATP + H2O = ADP + phosphate + H(+). It catalyses the reaction a 5'-end (5'-triphosphoguanosine)-ribonucleoside in mRNA + S-adenosyl-L-methionine = a 5'-end (N(7)-methyl 5'-triphosphoguanosine)-ribonucleoside in mRNA + S-adenosyl-L-homocysteine. It carries out the reaction a 5'-end (N(7)-methyl 5'-triphosphoguanosine)-ribonucleoside in mRNA + S-adenosyl-L-methionine = a 5'-end (N(7)-methyl 5'-triphosphoguanosine)-(2'-O-methyl-ribonucleoside) in mRNA + S-adenosyl-L-homocysteine + H(+). Capsid protein self-assembles to form an icosahedral capsid about 40 nm in diameter. Plays a role in virus budding by binding to the cell membrane and gathering the viral RNA into a nucleocapsid that forms the core of a mature virus particle. In terms of biological role, prevents premature fusion activity of envelope proteins in trans-Golgi by binding to envelope protein E at pH6.0. After virion release in extracellular space, gets dissociated from E dimers. Functionally, acts as a chaperone for envelope protein E during intracellular virion assembly by masking and inactivating envelope protein E fusion peptide. prM is the only viral peptide matured by host furin in the trans-Golgi network probably to avoid catastrophic activation of the viral fusion activity in acidic Golgi compartment prior to virion release. prM-E cleavage is inefficient, and many virions are only partially matured. These uncleaved prM would play a role in immune evasion. Its function is as follows. May play a role in virus budding. Exerts cytotoxic effects by activating a mitochondrial apoptotic pathway through M ectodomain. May display a viroporin activity. Binds to host cell surface receptor and mediates fusion between viral and cellular membranes. Envelope protein is synthesized in the endoplasmic reticulum in the form of heterodimer with protein prM. They play a role in virion budding in the ER, and the newly formed immature particle is covered with 60 spikes composed of heterodimer between precursor prM and envelope protein E. The virion is transported to the Golgi apparatus where the low pH causes dissociation of PrM-E heterodimers and formation of E homodimers. In terms of biological role, involved in immune evasion, pathogenesis and viral replication. Interacts with host MAVS and blocks MAVS binding to RIGI or IFIH1/MDA5, thereby leading to evasion of the innate immune response. Once cleaved off the polyprotein, is targeted to three destinations: the viral replication cycle, the plasma membrane and the extracellular compartment. Essential for viral replication. Required for formation of the replication complex and recruitment of other non-structural proteins to the ER-derived membrane structures. Excreted as a hexameric lipoparticle that plays a role against host immune response. Functionally, component of the viral RNA replication complex that functions in virion assembly. Its function is as follows. Required cofactor for the serine protease function of NS3. May have membrane-destabilizing activity and form viroporins. Displays three enzymatic activities: serine protease, NTPase and RNA helicase. NS3 serine protease, in association with NS2B, performs its autocleavage and cleaves the polyprotein at dibasic sites in the cytoplasm: C-prM, NS2A-NS2B, NS2B-NS3, NS3-NS4A, NS4A-2K and NS4B-NS5. NS3 RNA helicase binds RNA and unwinds dsRNA in the 3' to 5' direction. In terms of biological role, regulates the ATPase activity of the NS3 helicase activity. NS4A allows NS3 helicase to conserve energy during unwinding. Functionally, functions as a signal peptide for NS4B. Its function is as follows. Induces the formation of ER-derived membrane vesicles where the viral replication takes place. Replicates the viral (+) and (-) RNA genome, and performs the capping of genomes in the cytoplasm. NS5 methylates viral RNA cap at guanine N-7 and ribose 2'-O positions. This chain is Genome polyprotein, found in Anas (ducks).